Consider the following 100-residue polypeptide: UPF0213 protein YhbQ (100 aa).

Residues 2-77 enclose the GIY-YIG domain; that stretch reads TPWFLYLIRT…KQLTKRQKER (76 aa).

Belongs to the UPF0213 family.

The polypeptide is UPF0213 protein YhbQ (Escherichia fergusonii (strain ATCC 35469 / DSM 13698 / CCUG 18766 / IAM 14443 / JCM 21226 / LMG 7866 / NBRC 102419 / NCTC 12128 / CDC 0568-73)).